A 404-amino-acid chain; its full sequence is Glucoside xylosyltransferase 1 (404 aa).

At 1-6 (MRRYLR) the chain is on the cytoplasmic side. A helical; Signal-anchor for type II membrane protein membrane pass occupies residues 7 to 29 (VVGLCLACGFCSLLYAFSQLAVS). Residues 30 to 404 (LEEGAAGGRR…NRYDTPPKER (375 aa)) lie on the Lumenal side of the membrane. Residue Asn201 is glycosylated (N-linked (GlcNAc...) asparagine).

The protein belongs to the glycosyltransferase 8 family.

The protein localises to the membrane. The enzyme catalyses 3-O-(beta-D-glucosyl)-L-seryl-[EGF-like domain protein] + UDP-alpha-D-xylose = 3-O-[alpha-D-xylosyl-(1-&gt;3)-beta-D-glucosyl]-L-seryl-[EGF-like domain protein] + UDP + H(+). Its function is as follows. Glycosyltransferase which elongates the O-linked glucose attached to EGF-like repeats in the extracellular domain of Notch proteins by catalyzing the addition of xylose. The sequence is that of Glucoside xylosyltransferase 1 (Gxylt1) from Mus musculus (Mouse).